A 197-amino-acid polypeptide reads, in one-letter code: Sodium/potassium-transporting ATPase subunit beta-1-interacting protein 3 (197 aa).

The next 4 helical transmembrane spans lie at 2-22 (GCCTGRCSLICLCALQLVSAL), 35-55 (APILGNFLHIIVVILGLFGTI), 62-82 (IMVYTVWTALWVTWNVFIICF), and 152-172 (VQILLSLVGFVYACYVISISM).

Belongs to the NKAIN family. In terms of assembly, interacts with ATP1B1.

The protein localises to the cell membrane. The protein is Sodium/potassium-transporting ATPase subunit beta-1-interacting protein 3 (NKAIN3) of Homo sapiens (Human).